The following is a 151-amino-acid chain: Probable cGMP 3',5'-cyclic phosphodiesterase subunit delta (151 aa).

This sequence belongs to the PDE6D/unc-119 family. As to quaternary structure, interacts with Pde6.

The protein localises to the nucleus. The protein resides in the cytoplasm. The polypeptide is Probable cGMP 3',5'-cyclic phosphodiesterase subunit delta (Drosophila sechellia (Fruit fly)).